A 700-amino-acid chain; its full sequence is Probable transcription factor FUP6 (700 aa).

2 disordered regions span residues Ser343 to Ser364 and Phe577 to Gln624. A compositionally biased stretch (polar residues) spans Phe577–Ser595. Residues Asp596–Ser607 show a composition bias toward basic and acidic residues. Polar residues predominate over residues Asn608–Asn623.

The protein localises to the nucleus. Probable transcrition factor; part of the gene cluster that mediates the biosynthesis of the mycotoxin fusaproliferin (FUP) that belongs to the class of bicyclic sesterterpenoids. This is Probable transcription factor FUP6 from Fusarium proliferatum (strain ET1) (Orchid endophyte fungus).